A 118-amino-acid polypeptide reads, in one-letter code: Protein TusC (118 aa).

It belongs to the DsrF/TusC family. In terms of assembly, heterohexamer, formed by a dimer of trimers. The hexameric TusBCD complex contains 2 copies each of TusB, TusC and TusD. The TusBCD complex interacts with TusE.

The protein localises to the cytoplasm. Part of a sulfur-relay system required for 2-thiolation of 5-methylaminomethyl-2-thiouridine (mnm(5)s(2)U) at tRNA wobble positions. The chain is Protein TusC from Salmonella typhimurium (strain LT2 / SGSC1412 / ATCC 700720).